A 228-amino-acid chain; its full sequence is MPKLILCRHGQSEWNAKNLFTGWEDVNLSEQGINEATRAGEKVRENNIDIDVAFTSLLTRALDTTHYILTESKQQWIPVYKSWRLNERHYGGLQGLNKDDARKEFGEEQVHIWRRSYDVKPPAETEEQREAYLADRRYNHLDKRMMPYSESLKDTLVRVIPFWTDHISQYLLDGQTVLVSAHGNSIRALIKYLEDVSDEDIINYEIKTGAPLVYELTDDLEVIDKYYL.

Residues 8–15 (RHGQSEWN), 21–22 (TG), R60, 87–90 (ERHY), K98, 114–115 (RR), and 183–184 (GN) contribute to the substrate site. Residue H9 is the Tele-phosphohistidine intermediate of the active site. The Proton donor/acceptor role is filled by E87.

This sequence belongs to the phosphoglycerate mutase family. BPG-dependent PGAM subfamily.

It catalyses the reaction (2R)-2-phosphoglycerate = (2R)-3-phosphoglycerate. It participates in carbohydrate degradation; glycolysis; pyruvate from D-glyceraldehyde 3-phosphate: step 3/5. In terms of biological role, catalyzes the interconversion of 2-phosphoglycerate and 3-phosphoglycerate. The polypeptide is 2,3-bisphosphoglycerate-dependent phosphoglycerate mutase (Staphylococcus aureus (strain MRSA252)).